The primary structure comprises 222 residues: Eukaryotic translation initiation factor 3 subunit K (222 aa).

The PCI domain maps to Y46–K208.

This sequence belongs to the eIF-3 subunit K family. As to quaternary structure, component of the eukaryotic translation initiation factor 3 (eIF-3) complex. The eIF-3 complex interacts with pix.

It is found in the cytoplasm. Its function is as follows. Component of the eukaryotic translation initiation factor 3 (eIF-3) complex, which is involved in protein synthesis of a specialized repertoire of mRNAs and, together with other initiation factors, stimulates binding of mRNA and methionyl-tRNAi to the 40S ribosome. The eIF-3 complex specifically targets and initiates translation of a subset of mRNAs involved in cell proliferation. In Drosophila erecta (Fruit fly), this protein is Eukaryotic translation initiation factor 3 subunit K.